We begin with the raw amino-acid sequence, 405 residues long: Phosphopentomutase (405 aa).

Residues D10, D303, H308, D344, H345, and H356 each contribute to the Mn(2+) site.

The protein belongs to the phosphopentomutase family. It depends on Mn(2+) as a cofactor.

Its subcellular location is the cytoplasm. It catalyses the reaction 2-deoxy-alpha-D-ribose 1-phosphate = 2-deoxy-D-ribose 5-phosphate. The catalysed reaction is alpha-D-ribose 1-phosphate = D-ribose 5-phosphate. It participates in carbohydrate degradation; 2-deoxy-D-ribose 1-phosphate degradation; D-glyceraldehyde 3-phosphate and acetaldehyde from 2-deoxy-alpha-D-ribose 1-phosphate: step 1/2. Isomerase that catalyzes the conversion of deoxy-ribose 1-phosphate (dRib-1-P) and ribose 1-phosphate (Rib-1-P) to deoxy-ribose 5-phosphate (dRib-5-P) and ribose 5-phosphate (Rib-5-P), respectively. In Shewanella sediminis (strain HAW-EB3), this protein is Phosphopentomutase.